Here is a 378-residue protein sequence, read N- to C-terminus: Histidine decarboxylase (378 aa).

Residue His120 participates in substrate binding. Residue Lys233 is modified to N6-(pyridoxal phosphate)lysine.

This sequence belongs to the group II decarboxylase family. As to quaternary structure, homotetramer. Requires pyridoxal 5'-phosphate as cofactor.

The enzyme catalyses L-histidine + H(+) = histamine + CO2. This chain is Histidine decarboxylase (hdc), found in Klebsiella aerogenes (Enterobacter aerogenes).